The chain runs to 275 residues: NH(3)-dependent NAD(+) synthetase (275 aa).

50–57 contributes to the ATP binding site; it reads GISGGVDS. Asp-56 contributes to the Mg(2+) binding site. Residue Arg-147 participates in deamido-NAD(+) binding. Position 167 (Thr-167) interacts with ATP. Glu-172 is a Mg(2+) binding site. Residues Lys-180 and Asp-187 each coordinate deamido-NAD(+). Residues Lys-196 and Thr-218 each contribute to the ATP site. 267–268 is a binding site for deamido-NAD(+); it reads HK.

It belongs to the NAD synthetase family. Homodimer.

The enzyme catalyses deamido-NAD(+) + NH4(+) + ATP = AMP + diphosphate + NAD(+) + H(+). It participates in cofactor biosynthesis; NAD(+) biosynthesis; NAD(+) from deamido-NAD(+) (ammonia route): step 1/1. In terms of biological role, catalyzes the ATP-dependent amidation of deamido-NAD to form NAD. Uses ammonia as a nitrogen source. This Stutzerimonas stutzeri (strain A1501) (Pseudomonas stutzeri) protein is NH(3)-dependent NAD(+) synthetase.